The primary structure comprises 494 residues: Transcription factor SOX-9 (494 aa).

2 disordered regions span residues 1–66 (MNLL…ESDE) and 159–275 (ERLR…FRDV). Residues 27–42 (SDDSAGSPCPSGSGSD) show a composition bias toward low complexity. Basic and acidic residues-rich tracts occupy residues 56 to 66 (GDPDLKKESDE) and 159 to 174 (ERLR…DYKY). The interval 63 to 103 (ESDEDKFPVCIREAVSQVLKGYDWTLVPMPVRVNGSSKNKP) is dimerization (DIM). A PQA region spans residues 63–103 (ESDEDKFPVCIREAVSQVLKGYDWTLVPMPVRVNGSSKNKP). A Phosphoserine modification is found at Ser-64. The HMG box DNA-binding region spans 105 to 173 (VKRPMNAFMV…QHKKDHPDYK (69 aa)). Residue Ser-181 is modified to Phosphoserine. Residues 211–222 (SPQSSSSISEVH) show a composition bias toward low complexity. Residues 224–309 (PGEHSGQSQG…LPPNGHPGVP (86 aa)) are transactivation domain (TAM). 2 short sequence motifs (9aaTAD) span residues 277-286 (IGELSSDVIS) and 292-300 (DVNEFDQYL). The span at 326–337 (SSASSPAGAGHA) shows a compositional bias: low complexity. The disordered stretch occupies residues 326-402 (SSASSPAGAG…PQQQQQQQQQ (77 aa)). The span at 344-353 (PQPPQPPAQP) shows a compositional bias: pro residues. The interval 372–494 (RPHIKTEQLS…QPVYTQLTRP (123 aa)) is transactivation domain (TAC). A Glycyl lysine isopeptide (Lys-Gly) (interchain with G-Cter in SUMO) cross-link involves residue Lys-376. A compositionally biased stretch (polar residues) spans 378-387 (EQLSPSHYSE). Over residues 388–402 (QQQHSPQQQQQQQQQ) the composition is skewed to low complexity. The short motif at 445-453 (GGLYSTFTY) is the 9aaTAD 3 element. Residues 462–494 (YTPIADTSGVPSIPQTHSPQHWEQPVYTQLTRP) are disordered. The span at 470 to 494 (GVPSIPQTHSPQHWEQPVYTQLTRP) shows a compositional bias: polar residues.

As to quaternary structure, interacts with SNAI2; triggers neural crest delamination in a phosphorylation dependent manner. Interacts with UBE2I. Phosphorylated at Ser-181 in the developing neural tube. Phosphorylation at either Ser-64 or Ser-181 is required for sumoylation, but phosphorylation is not dependent on sumoylation. Sumoylation is enhanced by PKA. Phosphorylation is required for interaction with SNAI2 to trigger neural crest delamination and for an efficient trunk neural crest delamination, whereas sumoylation plays a less significant role. Phosphorylation and sumoylation are induced by BMP signaling pathway. Post-translationally, sumoylated at Lys-376; phosphorylation at either Ser-64 or Ser-181 is required for sumoylation. Sumoylation is induced by BMP signaling pathway.

The protein resides in the nucleus. Transcription factor that plays a key role in chondrocytes differentiation and skeletal development. Specifically binds the 5'-ACAAAG-3' DNA motif present in enhancers and super-enhancers and promotes expression of genes important for chondrogenesis, including COL2A1. Plays a central role in successive steps of chondrocyte differentiation. Absolutely required for precartilaginous condensation, the first step in chondrogenesis during which skeletal progenitors differentiate into prechondrocytes. Together with SOX5 and SOX6, required for overt chondrogenesis when condensed prechondrocytes differentiate into early stage chondrocytes, the second step in chondrogenesis. Later, required to direct hypertrophic maturation and block osteoblast differentiation of growth plate chondrocytes: maintains chondrocyte columnar proliferation, delays prehypertrophy and then prevents osteoblastic differentiation of chondrocytes. Also required for chondrocyte hypertrophy, both indirectly, by keeping the lineage fate of chondrocytes, and directly, by remaining present in upper hypertrophic cells. Low lipid levels are the main nutritional determinant for chondrogenic commitment of skeletal progenitor cells: when lipids levels are low, FOXO transcription factors promote expression of SOX9, which induces chondrogenic commitment and suppresses fatty acid oxidation. In addition to cartilage development, also acts as a regulator of proliferation and differentiation in epithelial stem/progenitor cells. In response to bone morphogenetic protein stimulus, phosphorylation is induced and then sumoylation, allowing cooperation with SNAI2 to trigger neural crest delamination. The protein is Transcription factor SOX-9 of Gallus gallus (Chicken).